Here is a 323-residue protein sequence, read N- to C-terminus: Delta-aminolevulinic acid dehydratase (323 aa).

Positions 118, 120, and 128 each coordinate Zn(2+). Lys-195 acts as the Schiff-base intermediate with substrate in catalysis. Residues Arg-205 and Arg-217 each coordinate 5-aminolevulinate. Glu-233 contacts Mg(2+). Catalysis depends on Lys-248, which acts as the Schiff-base intermediate with substrate. 2 residues coordinate 5-aminolevulinate: Ser-274 and Tyr-313.

It belongs to the ALAD family. Homooctamer. Requires Zn(2+) as cofactor.

It catalyses the reaction 2 5-aminolevulinate = porphobilinogen + 2 H2O + H(+). The protein operates within porphyrin-containing compound metabolism; protoporphyrin-IX biosynthesis; coproporphyrinogen-III from 5-aminolevulinate: step 1/4. Its function is as follows. Catalyzes an early step in the biosynthesis of tetrapyrroles. Binds two molecules of 5-aminolevulinate per subunit, each at a distinct site, and catalyzes their condensation to form porphobilinogen. This is Delta-aminolevulinic acid dehydratase (hemB) from Staphylococcus aureus.